The primary structure comprises 508 residues: Light-independent protochlorophyllide reductase subunit B (508 aa).

Aspartate 36 lines the [4Fe-4S] cluster pocket. The active-site Proton donor is aspartate 294. 429 to 430 (GM) is a binding site for substrate.

Belongs to the ChlB/BchB/BchZ family. Protochlorophyllide reductase is composed of three subunits; ChlL, ChlN and ChlB. Forms a heterotetramer of two ChlB and two ChlN subunits. [4Fe-4S] cluster serves as cofactor.

The catalysed reaction is chlorophyllide a + oxidized 2[4Fe-4S]-[ferredoxin] + 2 ADP + 2 phosphate = protochlorophyllide a + reduced 2[4Fe-4S]-[ferredoxin] + 2 ATP + 2 H2O. It participates in porphyrin-containing compound metabolism; chlorophyll biosynthesis (light-independent). Component of the dark-operative protochlorophyllide reductase (DPOR) that uses Mg-ATP and reduced ferredoxin to reduce ring D of protochlorophyllide (Pchlide) to form chlorophyllide a (Chlide). This reaction is light-independent. The NB-protein (ChlN-ChlB) is the catalytic component of the complex. This Nostoc sp. (strain PCC 7120 / SAG 25.82 / UTEX 2576) protein is Light-independent protochlorophyllide reductase subunit B.